The chain runs to 397 residues: Cytochrome b (397 aa).

4 helical membrane passes run 38–58 (FGSLAGICLVIQIVTGVFLAM), 82–104 (WLLRYMHANGASMFFIVVYLHIF), 119–139 (VWCLGVVIFLLMIVTAFIGYV), and 185–205 (FFSLHYLLPFILVGASLLHLA). Positions 88 and 102 each coordinate heme b. Heme b is bound by residues H189 and H203. H208 is an a ubiquinone binding site. Transmembrane regions (helical) follow at residues 231–251 (FYVKDLVGWVAFAIFFSIWIF), 295–315 (AGGVAAIALVFISLLALPFFK), 327–347 (IYQGIFWLLLADCLLLGWIGC), and 354–373 (FVTIGQISSFFFFLFFAITP).

This sequence belongs to the cytochrome b family. As to quaternary structure, the main subunits of complex b-c1 are: cytochrome b, cytochrome c1 and the Rieske protein. Heme b serves as cofactor.

The protein localises to the mitochondrion inner membrane. Its function is as follows. Component of the ubiquinol-cytochrome c reductase complex (complex III or cytochrome b-c1 complex) that is part of the mitochondrial respiratory chain. The b-c1 complex mediates electron transfer from ubiquinol to cytochrome c. Contributes to the generation of a proton gradient across the mitochondrial membrane that is then used for ATP synthesis. The protein is Cytochrome b (MT-CYB) of Oryza sativa subsp. japonica (Rice).